A 192-amino-acid polypeptide reads, in one-letter code: Elongation factor P (192 aa).

Belongs to the elongation factor P family.

The protein localises to the cytoplasm. Its pathway is protein biosynthesis; polypeptide chain elongation. In terms of biological role, involved in peptide bond synthesis. Stimulates efficient translation and peptide-bond synthesis on native or reconstituted 70S ribosomes in vitro. Probably functions indirectly by altering the affinity of the ribosome for aminoacyl-tRNA, thus increasing their reactivity as acceptors for peptidyl transferase. The sequence is that of Elongation factor P from Borrelia garinii subsp. bavariensis (strain ATCC BAA-2496 / DSM 23469 / PBi) (Borreliella bavariensis).